Consider the following 619-residue polypeptide: Probable ATP-dependent RNA helicase DDX59 (619 aa).

Residues 1-101 (MFVPRSLKIK…KSFSKTQRWP (101 aa)) form a disordered region. The span at 12–27 (SSNDDLKSGEAKKSKP) shows a compositional bias: basic and acidic residues. K26 is covalently cross-linked (Glycyl lysine isopeptide (Lys-Gly) (interchain with G-Cter in SUMO2)). The span at 59–76 (ASSTNSPSCQLAEVSSTG) shows a compositional bias: polar residues. At S64 the chain carries Phosphoserine. Basic and acidic residues predominate over residues 79 to 91 (EGVKDSHPSEEPV). The segment at 104–133 (GEPVCVVCGRYGEYICDKTDEDVCSLECKA) adopts an HIT-type zinc-finger fold. At S160 the chain carries Phosphoserine. The Q motif motif lies at 203–231 (IDFEHCGFPETLNQNLKKSGYEVPTPIQM). The region spanning 234 to 405 (IPVGLLGRDI…DQLLHNPVRI (172 aa)) is the Helicase ATP-binding domain. Residue 247–254 (ADTGSGKT) participates in ATP binding. The DEAD box signature appears at 353–356 (DEAD). In terms of domain architecture, Helicase C-terminal spans 416–579 (SVRQIILWVE…ILPPQLLNSP (164 aa)). Residues 583–594 (EQKRKEQQKDRQ) show a composition bias toward basic and acidic residues. Residues 583–603 (EQKRKEQQKDRQTQNSLVTGA) form a disordered region.

The protein belongs to the DEAD box helicase family. DDX59 subfamily. Interacts (via HIT-type zinc finger) with the RUVBL1/RUVBL2 complex in the presence of ADP.

It is found in the cytoplasm. Its subcellular location is the nucleus. It catalyses the reaction ATP + H2O = ADP + phosphate + H(+). This Mus musculus (Mouse) protein is Probable ATP-dependent RNA helicase DDX59 (Ddx59).